Consider the following 186-residue polypeptide: Protein GrpE (186 aa).

Positions 1–22 (MSDSNKEKKKKFADMVSKRKGD) are enriched in basic and acidic residues. The segment at 1–35 (MSDSNKEKKKKFADMVSKRKGDDQEDQQTGDLSEE) is disordered. Acidic residues predominate over residues 23-34 (DQEDQQTGDLSE).

It belongs to the GrpE family. In terms of assembly, homodimer.

It localises to the cytoplasm. Functionally, participates actively in the response to hyperosmotic and heat shock by preventing the aggregation of stress-denatured proteins, in association with DnaK and GrpE. It is the nucleotide exchange factor for DnaK and may function as a thermosensor. Unfolded proteins bind initially to DnaJ; upon interaction with the DnaJ-bound protein, DnaK hydrolyzes its bound ATP, resulting in the formation of a stable complex. GrpE releases ADP from DnaK; ATP binding to DnaK triggers the release of the substrate protein, thus completing the reaction cycle. Several rounds of ATP-dependent interactions between DnaJ, DnaK and GrpE are required for fully efficient folding. The chain is Protein GrpE from Wolbachia pipientis subsp. Culex pipiens (strain wPip).